Consider the following 57-residue polypeptide: Large ribosomal subunit protein uL30 (57 aa).

Belongs to the universal ribosomal protein uL30 family. In terms of assembly, part of the 50S ribosomal subunit.

The chain is Large ribosomal subunit protein uL30 from Acholeplasma laidlawii (strain PG-8A).